The following is a 472-amino-acid chain: 3-isopropylmalate dehydratase large subunit (472 aa).

Residues 289–312 (TWGTNPAQGTGVSQVVPSPDDAKD) form a disordered region. Positions 290–304 (WGTNPAQGTGVSQVV) are enriched in polar residues. Cysteine 347, cysteine 407, and cysteine 410 together coordinate [4Fe-4S] cluster.

The protein belongs to the aconitase/IPM isomerase family. LeuC type 1 subfamily. In terms of assembly, heterodimer of LeuC and LeuD. [4Fe-4S] cluster serves as cofactor.

The enzyme catalyses (2R,3S)-3-isopropylmalate = (2S)-2-isopropylmalate. It functions in the pathway amino-acid biosynthesis; L-leucine biosynthesis; L-leucine from 3-methyl-2-oxobutanoate: step 2/4. Catalyzes the isomerization between 2-isopropylmalate and 3-isopropylmalate, via the formation of 2-isopropylmaleate. The protein is 3-isopropylmalate dehydratase large subunit of Halalkalibacterium halodurans (strain ATCC BAA-125 / DSM 18197 / FERM 7344 / JCM 9153 / C-125) (Bacillus halodurans).